The following is a 594-amino-acid chain: Type IV inositol polyphosphate 5-phosphatase 7 (594 aa).

Residues 246–300 are disordered; sequence FRCGHRPSDYSRRPSDYSRPSDYYSRPSNYSRPSDVSRWGSSDDDNGPGDSPSTF. A compositionally biased stretch (basic and acidic residues) spans 251 to 261; the sequence is RPSDYSRRPSD. Residues 262–279 are compositionally biased toward low complexity; it reads YSRPSDYYSRPSNYSRPS. Catalytic stretches follow at residues 435 to 450 and 515 to 530; these read DRVI…IALS and KRRT…WHGE.

It belongs to the inositol polyphosphate 5-phosphatase family. As to expression, broadly expressed in emerging organs. Mostly localized in procambium of growing organs. Restricted to vascular differentiating cells of young organs.

It is found in the nucleus. The protein resides in the cell membrane. It carries out the reaction a 1,2-diacyl-sn-glycero-3-phospho-(1D-myo-inositol-4,5-bisphosphate) + H2O = a 1,2-diacyl-sn-glycero-3-phospho-(1D-myo-inositol 4-phosphate) + phosphate. The enzyme catalyses a 1,2-diacyl-sn-glycero-3-phospho-(1D-myo-inositol-3,4,5-trisphosphate) + H2O = a 1,2-diacyl-sn-glycero-3-phospho-(1D-myo-inositol-3,4-bisphosphate) + phosphate. Has phosphatase activity toward PtdIns(4,5)P2 and at a lower extent toward PtdIns(3,4,5)P3 but not toward Ins(1,4,5)P3. Acts redundantly with CVP2 for maintaining vascular continuity. Regulates phosphoinositide-dependent VAN3 localization. Functions in salt stress response by regulating reactive oxygen species (ROS) production and stress-responsive genes expression. In Arabidopsis thaliana (Mouse-ear cress), this protein is Type IV inositol polyphosphate 5-phosphatase 7.